A 184-amino-acid chain; its full sequence is Large ribosomal subunit protein uL10 (184 aa).

The protein belongs to the universal ribosomal protein uL10 family. Part of the ribosomal stalk of the 50S ribosomal subunit. The N-terminus interacts with L11 and the large rRNA to form the base of the stalk. The C-terminus forms an elongated spine to which L12 dimers bind in a sequential fashion forming a multimeric L10(L12)X complex.

In terms of biological role, forms part of the ribosomal stalk, playing a central role in the interaction of the ribosome with GTP-bound translation factors. The polypeptide is Large ribosomal subunit protein uL10 (Gluconobacter oxydans (strain 621H) (Gluconobacter suboxydans)).